Reading from the N-terminus, the 584-residue chain is Peroxynitrite isomerase THAP4 (584 aa).

The THAP-type zinc-finger motif lies at 1 to 85; sequence MVICCAAANC…LKPTAVPSIF (85 aa). The segment at 84–330 is disordered; sequence IFHLAEKKRR…EAVQSEHSDA (247 aa). The span at 89–104 shows a compositional bias: basic residues; it reads EKKRRAGGHGRPRRRD. Positions 122-138 are enriched in low complexity; it reads GKAAAGSPSSSSASPMA. Residues 158-178 are compositionally biased toward basic and acidic residues; that stretch reads AARETAGQERGRQPLEGRAED. The segment covering 190–208 has biased composition (low complexity); sequence GEAGTGAEDAGEEGATPAD. The HCFC1-binding motif (HBM) motif lies at 236–239; sequence LHSY. Ser240 carries the post-translational modification Phosphoserine. A compositionally biased stretch (basic and acidic residues) spans 248-267; sequence ERPAVPREPVERKRLRRDAE. The interval 422–584 is nitrobindin; it reads PPKMSPVVEP…LHVTYKKVTP (163 aa). 2 residues coordinate heme b: Thr451 and His574.

This sequence in the C-terminal section; belongs to the nitrobindin family. As to quaternary structure, homodimer. It depends on heme b as a cofactor.

Its subcellular location is the cytoplasm. It localises to the nucleus. The catalysed reaction is peroxynitrite = nitrate. Its pathway is nitrogen metabolism. Heme-binding protein able to scavenge peroxynitrite and to protect free L-tyrosine against peroxynitrite-mediated nitration, by acting as a peroxynitrite isomerase that converts peroxynitrite to nitrate. Therefore, this protein likely plays a role in peroxynitrite sensing and in the detoxification of reactive nitrogen and oxygen species (RNS and ROS, respectively). Is able to bind nitric oxide (NO) in vitro, but may act as a sensor of peroxynitrite levels in vivo, possibly modulating the transcriptional activity residing in the N-terminal region. This chain is Peroxynitrite isomerase THAP4, found in Bos taurus (Bovine).